The sequence spans 328 residues: Tryptophan--tRNA ligase (328 aa).

Residues 9–11 and 17–18 contribute to the ATP site; these read QPS and GN. The 'HIGH' region motif lies at 10–18; it reads PSGVITIGN. L-tryptophan is bound at residue D132. ATP is bound by residues 144 to 146, I183, and 192 to 196; these read GED and KMSKS. The 'KMSKS' region signature appears at 192 to 196; it reads KMSKS.

The protein belongs to the class-I aminoacyl-tRNA synthetase family. Homodimer.

It localises to the cytoplasm. The enzyme catalyses tRNA(Trp) + L-tryptophan + ATP = L-tryptophyl-tRNA(Trp) + AMP + diphosphate + H(+). Inhibited by indolmycin, a competitive inhibitor for tryptophan. In terms of biological role, catalyzes the attachment of tryptophan to tRNA(Trp). The chain is Tryptophan--tRNA ligase from Geobacillus stearothermophilus (Bacillus stearothermophilus).